Reading from the N-terminus, the 481-residue chain is Docking protein 1 (481 aa).

N-acetylmethionine is present on Met-1. The PH domain occupies 4 to 119 (AVMEGPLFLQ…WVQTLCRNAF (116 aa)). Position 48 is a phosphoserine (Ser-48). An IRS-type PTB domain is found at 151–259 (EGSQFWVTVQ…HRQKAQGKAG (109 aa)). 2 positions are modified to phosphoserine: Ser-269 and Ser-291. Positions 270–293 (HEGEVAEGKLPSPPGPQELLDSPP) are disordered. Residue Tyr-296 is modified to Phosphotyrosine. The interval 307–329 (PCPSQDSLYSDPLDSTSAQAGEG) is disordered. The segment covering 310–325 (SQDSLYSDPLDSTSAQ) has biased composition (polar residues). Residues Tyr-337 and Tyr-341 each carry the phosphotyrosine modification. Position 362 is a phosphotyrosine; by INSR (Tyr-362). Tyr-377 bears the Phosphotyrosine mark. Tyr-398 carries the post-translational modification Phosphotyrosine; by INSR. Residues 404-481 (PATDDYAVPP…KTGVKSEGST (78 aa)) are disordered. Tyr-409 bears the Phosphotyrosine mark. A Phosphoserine modification is found at Ser-416. Over residues 436-458 (ATGSGIKSHNSALYSQVQKSGAS) the composition is skewed to polar residues. A Phosphotyrosine modification is found at Tyr-449. At Ser-460 the chain carries Phosphoserine.

Belongs to the DOK family. Type A subfamily. In terms of assembly, interacts with ABL1. Interacts with RasGAP and INPP5D/SHIP1. Interacts directly with phosphorylated ITGB3. Interacts with SRMS (via the SH2 and SH3 domains). Constitutively tyrosine-phosphorylated. Phosphorylated by TEC. Phosphorylated by LYN. Phosphorylated on tyrosine residues by the insulin receptor kinase. Results in the negative regulation of the insulin signaling pathway. Phosphorylated on tyrosine residues by SRMS. As to expression, expressed in pancreas, heart, leukocyte and spleen. Expressed in both resting and activated peripheral blood T-cells. Expressed in breast cancer.

It localises to the cytoplasm. The protein localises to the nucleus. It is found in the perinuclear region. Its function is as follows. DOK proteins are enzymatically inert adaptor or scaffolding proteins. They provide a docking platform for the assembly of multimolecular signaling complexes. DOK1 appears to be a negative regulator of the insulin signaling pathway. Modulates integrin activation by competing with talin for the same binding site on ITGB3. The protein is Docking protein 1 (DOK1) of Homo sapiens (Human).